Consider the following 762-residue polypeptide: ABC-type oligopeptide transporter ABCB9 (762 aa).

Transmembrane regions (helical) follow at residues Val-7 to Phe-27, Val-47 to Gly-67, Leu-84 to Phe-104, Phe-116 to Leu-136, Val-181 to Leu-201, Phe-221 to Ile-241, Val-315 to Ile-335, and Ser-412 to Ile-432. In terms of domain architecture, ABC transmembrane type-1 spans Leu-184 to Gln-467. The ABC transporter domain maps to Val-500–Arg-736. Position 535–542 (Gly-535–Ser-542) interacts with ATP.

It belongs to the ABC transporter superfamily. ABCB family. MHC peptide exporter (TC 3.A.1.209) subfamily. Homodimer. Interacts (via TMD0 region) with LAMP1; this interaction strongly stabilizes ABCB9 and protects ABCB9 against lysosomal degradation. Interacts (via TMD0 region) with LAMP2 (isoform LAMP-2B). Interacts (via TMD0) with YIF1B; this interaction allows (but is not essential) the ER-to-Golgi trafficking and strongly depends on a salt bridge within TMD0. As to expression, highly expressed in testis, particularly in the Sertoli cells of the seminiferous tubules, and at moderate levels in brain and spinal cord.

The protein resides in the lysosome membrane. The catalysed reaction is a [oligopeptide](in) + ATP + H2O = a [oligopeptide](out) + ADP + phosphate + H(+). Its function is as follows. ATP-dependent low-affinity peptide transporter which translocates a broad spectrum of peptides from the cytosol to the lysosomal lumen for degradation. Displays a broad peptide length specificity from 6-mer up to at least 59-mer peptides with an optimum of 23-mers. Binds and transports smaller and larger peptides with the same affinity. Favors positively charged, aromatic or hydrophobic residues in the N- and C-terminal positions whereas negatively charged residues as well as asparagine and methionine are not favored. The sequence is that of ABC-type oligopeptide transporter ABCB9 from Mus musculus (Mouse).